A 204-amino-acid polypeptide reads, in one-letter code: Small ribosomal subunit protein uS4 (204 aa).

The S4 RNA-binding domain occupies 92–156 (RRLDALVLRS…SKVPFQVARE (65 aa)).

It belongs to the universal ribosomal protein uS4 family. Part of the 30S ribosomal subunit. Contacts protein S5. The interaction surface between S4 and S5 is involved in control of translational fidelity.

In terms of biological role, one of the primary rRNA binding proteins, it binds directly to 16S rRNA where it nucleates assembly of the body of the 30S subunit. Its function is as follows. With S5 and S12 plays an important role in translational accuracy. The chain is Small ribosomal subunit protein uS4 from Streptomyces griseus subsp. griseus (strain JCM 4626 / CBS 651.72 / NBRC 13350 / KCC S-0626 / ISP 5235).